A 306-amino-acid chain; its full sequence is Bifunctional protein FolD (306 aa).

NADP(+) is bound by residues 164–166, serine 189, and threonine 230; that span reads GRS.

This sequence belongs to the tetrahydrofolate dehydrogenase/cyclohydrolase family. In terms of assembly, homodimer.

The enzyme catalyses (6R)-5,10-methylene-5,6,7,8-tetrahydrofolate + NADP(+) = (6R)-5,10-methenyltetrahydrofolate + NADPH. It carries out the reaction (6R)-5,10-methenyltetrahydrofolate + H2O = (6R)-10-formyltetrahydrofolate + H(+). It functions in the pathway one-carbon metabolism; tetrahydrofolate interconversion. Its function is as follows. Catalyzes the oxidation of 5,10-methylenetetrahydrofolate to 5,10-methenyltetrahydrofolate and then the hydrolysis of 5,10-methenyltetrahydrofolate to 10-formyltetrahydrofolate. This chain is Bifunctional protein FolD, found in Solibacter usitatus (strain Ellin6076).